The primary structure comprises 254 residues: Ribosomal RNA large subunit methyltransferase E (254 aa).

Residues 1 to 18 (MTNSGKTGGKSGKGGTGG) show a composition bias toward gly residues. The segment at 1 to 26 (MTNSGKTGGKSGKGGTGGARALKVRV) is disordered. The S-adenosyl-L-methionine site is built by Gly89, Trp91, Asp119, Asp135, and Asp159. Lys199 (proton acceptor) is an active-site residue.

It belongs to the class I-like SAM-binding methyltransferase superfamily. RNA methyltransferase RlmE family.

The protein localises to the cytoplasm. The catalysed reaction is uridine(2552) in 23S rRNA + S-adenosyl-L-methionine = 2'-O-methyluridine(2552) in 23S rRNA + S-adenosyl-L-homocysteine + H(+). In terms of biological role, specifically methylates the uridine in position 2552 of 23S rRNA at the 2'-O position of the ribose in the fully assembled 50S ribosomal subunit. The protein is Ribosomal RNA large subunit methyltransferase E of Parvibaculum lavamentivorans (strain DS-1 / DSM 13023 / NCIMB 13966).